Reading from the N-terminus, the 551-residue chain is Glucans biosynthesis protein D (551 aa).

A signal peptide (tat-type signal) is located at residues 1–32 (MNRRRFIKASLALAAACGTPGLATLFSRNAWA).

The protein belongs to the OpgD/OpgG family. Post-translationally, predicted to be exported by the Tat system. The position of the signal peptide cleavage has not been experimentally proven.

The protein localises to the periplasm. Its pathway is glycan metabolism; osmoregulated periplasmic glucan (OPG) biosynthesis. Its function is as follows. Probably involved in the control of the structural glucose backbone of osmoregulated periplasmic glucans (OPGs). In Cronobacter sakazakii (strain ATCC BAA-894) (Enterobacter sakazakii), this protein is Glucans biosynthesis protein D.